The chain runs to 183 residues: MGYRRSYAITFVALVAALWSVTKAQPSSSCVSTLTTLSPCLSYITGNSTTPSQPCCSRLDSVIKSSPQCICSAVNSPIPNIGLNINRTQALQLPNACNIQTPPLTQCNAATGPTAQPPAPSPTEKTPDVTLTPTSLPGARSGVGGGSKTVPSVGTGSSSRNVDPLPLHFLMFAVLVVCTSSFL.

Positions 1 to 24 (MGYRRSYAITFVALVAALWSVTKA) are cleaved as a signal peptide. Disulfide bonds link C30–C71, C40–C55, C56–C97, and C69–C107. N-linked (GlcNAc...) asparagine glycosylation is found at N47 and N86. The disordered stretch occupies residues 108–158 (NAATGPTAQPPAPSPTEKTPDVTLTPTSLPGARSGVGGGSKTVPSVGTGSS). Positions 149-158 (TVPSVGTGSS) are enriched in polar residues. Residue S158 is the site of GPI-anchor amidated serine attachment. Positions 159–183 (SRNVDPLPLHFLMFAVLVVCTSSFL) are cleaved as a propeptide — removed in mature form.

Belongs to the plant LTP family. As to expression, expressed in seedlings, preferentially in the endodermis of hypocotyls and roots. Also observed in siliques.

The protein resides in the cell membrane. Functionally, probable lipid transfer protein. The sequence is that of Non-specific lipid transfer protein GPI-anchored 15 from Arabidopsis thaliana (Mouse-ear cress).